We begin with the raw amino-acid sequence, 486 residues long: Vesicular GABA transporter (486 aa).

Residues 1–93 (MASNRFQNLQ…EASEPISALQ (93 aa)) lie on the Cytoplasmic side of the membrane. Over residues 29-46 (LNEVPSYQNQPQTGESGS) the composition is skewed to polar residues. Residues 29–85 (LNEVPSYQNQPQTGESGSNPPPHDRLEPIQESVVSEQPQKDDINKQEEAKDDGHGEA) form a disordered region. The segment covering 66-85 (PQKDDINKQEEAKDDGHGEA) has biased composition (basic and acidic residues). The helical transmembrane segment at 94 to 114 (AAWNVTNAIQGMFIVGLPIAV) threads the bilayer. At 115-119 (KVGGW) the chain is on the lumenal, vesicle side. Residues 120-140 (WSIGAMVGVAYVCYWTGVLLI) traverse the membrane as a helical segment. At 141–167 (ECLYENGVKKRKTYREIADFYKPGFGK) the chain is on the cytoplasmic side. Residues 168–188 (WVLAAQLTELLSTCIIYLVLA) traverse the membrane as a helical segment. The Lumenal, vesicle segment spans residues 189–203 (ADLLQSCFPSVDKAG). Residues 204-224 (WMMITSASLLTCSFLDDLQIV) form a helical membrane-spanning segment. Residues 225 to 228 (SRLS) lie on the Cytoplasmic side of the membrane. Residues 229-249 (FFNAISHLIVNLIMVLYCLSF) traverse the membrane as a helical segment. Residues 250–263 (VSQWSFSTITFSLN) lie on the Lumenal, vesicle side of the membrane. Residues 264-284 (INTLPTIVGMVVFGYTSHIFL) form a helical membrane-spanning segment. Residues 285-305 (PNLEGNMKNPAQFNVMLKWSH) lie on the Cytoplasmic side of the membrane. A helical transmembrane segment spans residues 306 to 326 (IAAAVFKVVFGMLGFLTFGEL). Residues 327-341 (TQEEISNSLPNQSFK) are Lumenal, vesicle-facing. Residue asparagine 337 is glycosylated (N-linked (GlcNAc...) asparagine). A helical membrane pass occupies residues 342 to 362 (ILVNLILVVKALLSYPLPFYA). At 363-398 (AVQLLKNNLFLGYPQTPFTSCYSPDKSLREWAVTLR) the chain is on the cytoplasmic side. Residues 399 to 419 (IILVLFTLFVALSVPYLVELM) form a helical membrane-spanning segment. Residues 420–421 (GL) are Lumenal, vesicle-facing. Residues 422–442 (VGNITGTMLSFIWPALFHLYI) traverse the membrane as a helical segment. The Cytoplasmic segment spans residues 443–457 (KEKTLNNFEKRFDQG). The chain crosses the membrane as a helical span at residues 458-478 (IIIMGCSVCISGVYFSSMELL). Over 479-486 (RAINSADS) the chain is Lumenal, vesicle.

The protein belongs to the amino acid/polyamine transporter 2 family.

The protein localises to the cytoplasmic vesicle membrane. Involved in the uptake of GABA into the synaptic vesicles. The chain is Vesicular GABA transporter (unc-47) from Caenorhabditis elegans.